A 76-amino-acid chain; its full sequence is UPF0729 protein C18orf32 homolog (76 aa).

Residues 1 to 37 (MVCIPCIVIPVLLWVYKKFLEPYIYPLISPFVSRMWP) are necessary for its localzation to the endoplasmic reticulum and lipid droplets. Residues 47 to 56 (KNKGKVDYKG) are compositionally biased toward basic and acidic residues. The segment at 47 to 76 (KNKGKVDYKGADINGLPTRGPTEMCDKKKD) is disordered.

Belongs to the UPF0729 family. In terms of assembly, interacts with DERL1 and AMFR. In terms of processing, undergoes ER-associated degradation (ERAD).

The protein localises to the endoplasmic reticulum. Its subcellular location is the lipid droplet. In terms of biological role, may activate the NF-kappa-B signaling pathway. This is UPF0729 protein C18orf32 homolog from Bos taurus (Bovine).